The following is a 149-amino-acid chain: Urease accessory protein UreE (149 aa).

Belongs to the UreE family.

The protein localises to the cytoplasm. Involved in urease metallocenter assembly. Binds nickel. Probably functions as a nickel donor during metallocenter assembly. This Ureaplasma parvum serovar 3 (strain ATCC 700970) protein is Urease accessory protein UreE.